The sequence spans 371 residues: Leucine-rich repeat-containing protein 58 (371 aa).

Serine 24 carries the post-translational modification Phosphoserine. 9 LRR repeats span residues 45-66 (ALLRLLLPHNRLVSLPRALGSG), 69-91 (HLQLLDVSGNALTALGPELLALR), 92-113 (GLRTLLAKNNRLGGPSALPKGL), 121-143 (SLQVLNLSGNCFQEVPASLLELR), 144-166 (ALQTLSLGGNQLQSIPAEIENLQ), 167-189 (SLECLYLGGNFIKEIPPELGNLP), 190-211 (SLNYLVLCDNKIQSIPPQLSQL), 213-234 (SLRSLSLHNNLLTYLPREILNL), and 236-256 (HLEELSLRGNPLVVRFVRDLT). Residues 340 to 351 (SSASHSSTSQSE) show a composition bias toward low complexity. A disordered region spans residues 340–361 (SSASHSSTSQSESDSEDEASVA).

This Homo sapiens (Human) protein is Leucine-rich repeat-containing protein 58 (LRRC58).